The sequence spans 281 residues: Nucleoid occlusion protein (281 aa).

The tract at residues Met1–Glu24 is disordered. The segment at residues Glu145–Leu164 is a DNA-binding region (H-T-H motif).

This sequence belongs to the ParB family.

Its subcellular location is the cytoplasm. It localises to the nucleoid. Functionally, effects nucleoid occlusion by binding relatively nonspecifically to DNA and preventing the assembly of the division machinery in the vicinity of the nucleoid, especially under conditions that disturb the cell cycle. It helps to coordinate cell division and chromosome segregation by preventing the formation of the Z ring through the nucleoid, which would cause chromosome breakage. The polypeptide is Nucleoid occlusion protein (Geobacillus kaustophilus (strain HTA426)).